We begin with the raw amino-acid sequence, 284 residues long: Protein-S-isoprenylcysteine O-methyltransferase (284 aa).

The Cytoplasmic portion of the chain corresponds to 1–16 (MAGCAARVPPGSEARL). The chain crosses the membrane as a helical span at residues 17 to 33 (SLATFLLGASVLALPLL). At 34 to 41 (TRAGLQGR) the chain is on the lumenal side. Residues 42-59 (TGLALYVAGLNALLLLLY) traverse the membrane as a helical segment. Residues 60-69 (RPPRYQIAIR) are Cytoplasmic-facing. The chain crosses the membrane as a helical span at residues 70-87 (ACFLGFVFGCGVLLSFSQ). Topologically, residues 88–92 (SSWNH) are lumenal. A helical transmembrane segment spans residues 93 to 112 (FGWYVCSLSLFHYSEYLVTA). Residues 113 to 131 (VNNPKSLSLDSFLLNHSLE) are Cytoplasmic-facing. The chain crosses the membrane as a helical span at residues 132 to 149 (YTVAALSSWIEFTLENIF). The Lumenal portion of the chain corresponds to 150-154 (WPELK). Residues 155 to 174 (QITWLSAAGLLMVIFGECLR) form a helical membrane-spanning segment. Over 175-212 (KVAMFTAGSNFNHVVQSEKSDTHTLVTSGVYAWCRHPS) the chain is Cytoplasmic. Residues glutamine 190, 197–200 (HTLV), tyrosine 205, and 210–213 (HPSY) contribute to the S-adenosyl-L-methionine site. The chain crosses the membrane as a helical span at residues 213-228 (YVGWFYWSIGTQVMLC). Position 229 (asparagine 229) is a topological domain, lumenal. Residues 230-244 (PICGVVYALTVWRFF) traverse the membrane as a helical segment. Over 245–284 (RDRTEEEEISLIHFFGEEYLDYKKRVPTGLPFIKGVKVGL) the chain is Cytoplasmic. Substrate is bound at residue arginine 247. Glutamate 251 provides a ligand contact to S-adenosyl-L-methionine.

The protein belongs to the class VI-like SAM-binding methyltransferase superfamily. Isoprenylcysteine carboxyl methyltransferase family.

The protein resides in the endoplasmic reticulum membrane. It carries out the reaction [protein]-C-terminal S-[(2E,6E)-farnesyl]-L-cysteine + S-adenosyl-L-methionine = [protein]-C-terminal S-[(2E,6E)-farnesyl]-L-cysteine methyl ester + S-adenosyl-L-homocysteine. Catalyzes the post-translational methylation of isoprenylated C-terminal cysteine residues. In Rattus norvegicus (Rat), this protein is Protein-S-isoprenylcysteine O-methyltransferase.